We begin with the raw amino-acid sequence, 468 residues long: Methylenetetrahydrofolate--tRNA-(uracil-5-)-methyltransferase TrmFO (468 aa).

10–15 (GGGLAG) lines the FAD pocket.

It belongs to the MnmG family. TrmFO subfamily. Requires FAD as cofactor.

The protein resides in the cytoplasm. It catalyses the reaction uridine(54) in tRNA + (6R)-5,10-methylene-5,6,7,8-tetrahydrofolate + NADH + H(+) = 5-methyluridine(54) in tRNA + (6S)-5,6,7,8-tetrahydrofolate + NAD(+). The catalysed reaction is uridine(54) in tRNA + (6R)-5,10-methylene-5,6,7,8-tetrahydrofolate + NADPH + H(+) = 5-methyluridine(54) in tRNA + (6S)-5,6,7,8-tetrahydrofolate + NADP(+). Its function is as follows. Catalyzes the folate-dependent formation of 5-methyl-uridine at position 54 (M-5-U54) in all tRNAs. This Chelativorans sp. (strain BNC1) protein is Methylenetetrahydrofolate--tRNA-(uracil-5-)-methyltransferase TrmFO.